A 197-amino-acid polypeptide reads, in one-letter code: Imidazoleglycerol-phosphate dehydratase (197 aa).

It belongs to the imidazoleglycerol-phosphate dehydratase family.

The protein resides in the cytoplasm. The enzyme catalyses D-erythro-1-(imidazol-4-yl)glycerol 3-phosphate = 3-(imidazol-4-yl)-2-oxopropyl phosphate + H2O. The protein operates within amino-acid biosynthesis; L-histidine biosynthesis; L-histidine from 5-phospho-alpha-D-ribose 1-diphosphate: step 6/9. The polypeptide is Imidazoleglycerol-phosphate dehydratase (Pseudomonas putida (strain ATCC 700007 / DSM 6899 / JCM 31910 / BCRC 17059 / LMG 24140 / F1)).